The following is a 156-amino-acid chain: uncharacterized protein (156 aa).

Residues 1–12 (MSARPSLPPLPA) show a composition bias toward pro residues. 2 disordered regions span residues 1 to 89 (MSAR…PPPA) and 129 to 156 (PLSPPAKRRGIRTWGHPSYLTPSPTMRD). Positions 49 to 67 (ARAEEAGGEEGKREAEAWT) are enriched in basic and acidic residues.

This is an uncharacterized protein from Homo sapiens (Human).